A 200-amino-acid chain; its full sequence is 3-isopropylmalate dehydratase small subunit (200 aa).

The protein belongs to the LeuD family. LeuD type 1 subfamily. Heterodimer of LeuC and LeuD.

It carries out the reaction (2R,3S)-3-isopropylmalate = (2S)-2-isopropylmalate. Its pathway is amino-acid biosynthesis; L-leucine biosynthesis; L-leucine from 3-methyl-2-oxobutanoate: step 2/4. In terms of biological role, catalyzes the isomerization between 2-isopropylmalate and 3-isopropylmalate, via the formation of 2-isopropylmaleate. The sequence is that of 3-isopropylmalate dehydratase small subunit from Vibrio parahaemolyticus serotype O3:K6 (strain RIMD 2210633).